Consider the following 455-residue polypeptide: Golgi pH regulator (455 aa).

5 consecutive transmembrane segments (helical) span residues I5–F25, V46–L66, L79–V99, C114–L134, and V150–P170. N-linked (GlcNAc...) asparagine glycosylation occurs at N180. A run of 4 helical transmembrane segments spans residues F288–I308, I343–L363, V378–I398, and W425–H445.

This sequence belongs to the Golgi pH regulator (TC 1.A.38) family. Homotrimer. Interacts with RABL3; the interaction stabilizes GPR89.

The protein localises to the golgi apparatus membrane. It carries out the reaction iodide(out) = iodide(in). The enzyme catalyses chloride(in) = chloride(out). The catalysed reaction is bromide(in) = bromide(out). It catalyses the reaction fluoride(in) = fluoride(out). Functionally, voltage-gated channel that enables the transfer of monoatomic anions such as iodide, chloride, bromide and fluoride which may function in counter-ion conductance and participates in Golgi acidification. Plays a role in lymphocyte development, probably by acting as a RABL3 effector in hematopoietic cells. The protein is Golgi pH regulator of Mus musculus (Mouse).